A 372-amino-acid chain; its full sequence is Spermidine/putrescine import ATP-binding protein PotA (372 aa).

Positions 12-250 (VSIRSVRKVY…PRNRFVADFI (239 aa)) constitute an ABC transporter domain. 48-55 (GPSGCGKT) contributes to the ATP binding site.

The protein belongs to the ABC transporter superfamily. Spermidine/putrescine importer (TC 3.A.1.11.1) family. As to quaternary structure, the complex is composed of two ATP-binding proteins (PotA), two transmembrane proteins (PotB and PotC) and a solute-binding protein (PotD).

It is found in the cell inner membrane. The catalysed reaction is ATP + H2O + polyamine-[polyamine-binding protein]Side 1 = ADP + phosphate + polyamineSide 2 + [polyamine-binding protein]Side 1.. In terms of biological role, part of the ABC transporter complex PotABCD involved in spermidine/putrescine import. Responsible for energy coupling to the transport system. This Pseudomonas fluorescens (strain ATCC BAA-477 / NRRL B-23932 / Pf-5) protein is Spermidine/putrescine import ATP-binding protein PotA.